The following is a 210-amino-acid chain: MSAKSAISKEIFAPLDERMLGAVQVKRRTKKKIPFLATGGQGEYLTYICLSVTNKKPTQASITKVKQFEGSTSFVRRSQWMLEQLRQVNGIDPNRDSAEFDLLFENAFDQWVASTASEKCTFFQILHHTCQRYLTDRKPEFINCQSKIMGGNSILHSAADSVTSAVQKASQALNERGERLGRAEEKTEDMKNSAQQFAETAHKLAMKHKC.

Residue Ser-2 is modified to N-acetylserine. The v-SNARE coiled-coil homology domain maps to Gly-151–Cys-210.

As to quaternary structure, part of a ternary complex containing SNAP25 and STX1A that can be dissociated by NAPA and NSF. Interacts with STX4A.

Its subcellular location is the cytoplasm. The protein localises to the membrane. Forms non-fusogenic complexes with SNAP25 and STX1A and may thereby modulate the formation of functional SNARE complexes and exocytosis. This is Syntaxin-binding protein 6 (Stxbp6) from Mus musculus (Mouse).